The chain runs to 347 residues: Haptoglobin (347 aa).

Residues 1–18 form the signal peptide; it reads MSALGAVIALLLWGQLFA. A Sushi domain is found at 31-88; the sequence is DGCPKPPEIANGYVEHLVRYQCKKYYRLRTEGDGVYTLNNEKQWTNKAVGDKLPECEA. Cystine bridges form between cysteine 52–cysteine 86, cysteine 90–cysteine 207, cysteine 250–cysteine 281, and cysteine 292–cysteine 322. Residues 103 to 345 form the Peptidase S1 domain; the sequence is ILGGHLDAKG…IQDWVQKTIA (243 aa). Residues asparagine 125, asparagine 148, asparagine 152, and asparagine 182 are each glycosylated (N-linked (GlcNAc...) asparagine). Residues 259–264 form an interaction with CD163 region; the sequence is VPEKKT.

It belongs to the peptidase S1 family. In terms of assembly, tetramer of two alpha and two beta chains; disulfide-linked. The hemoglobin/haptoglobin complex is composed of a haptoglobin dimer bound to two hemoglobin alpha-beta dimers. Interacts with CD163. Interacts with ERGIC3. In terms of tissue distribution, expressed by the liver and secreted in plasma.

The protein localises to the secreted. As a result of hemolysis, hemoglobin is found to accumulate in the kidney and is secreted in the urine. Haptoglobin captures, and combines with free plasma hemoglobin to allow hepatic recycling of heme iron and to prevent kidney damage. Haptoglobin also acts as an antioxidant, has antibacterial activity and plays a role in modulating many aspects of the acute phase response. Hemoglobin/haptoglobin complexes are rapidly cleared by the macrophage CD163 scavenger receptor expressed on the surface of liver Kupfer cells through an endocytic lysosomal degradation pathway. The chain is Haptoglobin (HP) from Ateles geoffroyi (Black-handed spider monkey).